Consider the following 695-residue polypeptide: Segment polarity protein dishevelled homolog DVL-1 (695 aa).

Residues 1–85 (MAETKIIYHM…RVVSWLVLAE (85 aa)) enclose the DIX domain. Positions 89–236 (SDAGSQGTDS…RLRQTDRASS (148 aa)) are disordered. The segment covering 142–151 (SHRRERARRR) has biased composition (basic residues). Residues 152-171 (NRDEAARTNGHPRGDRRREL) show a composition bias toward basic and acidic residues. A compositionally biased stretch (low complexity) spans 177–192 (SASTVLSSELESSSFI). Residue Ser194 is modified to Phosphoserine. A compositionally biased stretch (low complexity) spans 201-214 (SRLSSSTEQSTSSR). Over residues 215 to 228 (LIRKHKCRRRKQRL) the composition is skewed to basic residues. The PDZ domain maps to 251 to 323 (TVTLNMERHH…NDDAVRVLRE (73 aa)). The DEP domain maps to 425–499 (PDSGLEIRDR…SEQCYYVFGD (75 aa)). The span at 551 to 580 (PAYQDPGFSYGSGSAGSQQSEGSKSSGSTR) shows a compositional bias: low complexity. Positions 551–641 (PAYQDPGFSY…SQASAVAPGL (91 aa)) are disordered. Over residues 622 to 635 (SQLSRGSSPRSQAS) the composition is skewed to polar residues.

Belongs to the DSH family. In terms of assembly, interacts with BRD7 and INVS. Interacts (via PDZ domain) with the VANGL1 and VANGL2 (via C-terminus). Interacts (via PDZ domain) with NXN. Interacts with CXXC4. Interacts with ARRB1; the interaction is enhanced by phosphorylation of DVL1. Interacts with CYLD. Interacts (via PDZ domain) with RYK. Self-associates (via DIX domain) and forms higher homooligomers. Interacts (via PDZ domain) with DACT1 and FZD7, where DACT1 and FZD7 compete for the same binding site. Interacts (via DEP domain) with MUSK; the interaction is direct and mediates the formation a DVL1, MUSK and PAK1 ternary complex involved in AChR clustering. Interacts (via PDZ domain) with TMEM88. Interacts with DCDC2. Interacts with FOXK2. Interacts with PKD1 (via extracellular domain). Interacts (via PDZ domain) with CCDC88C/DAPLE; competes with CCDC88C for binding to frizzled receptor FZD7 and dissociates from CCDC88C following initiation of non-canonical Wnt signaling when CCDC88C displaces DVL1 from ligand-activated FZD7. Post-translationally, ubiquitinated; undergoes both 'Lys-48'-linked ubiquitination, leading to its subsequent degradation by the ubiquitin-proteasome pathway, and 'Lys-63'-linked ubiquitination. The interaction with INVS is required for ubiquitination. Deubiquitinated by CYLD, which acts on 'Lys-63'-linked ubiquitin chains.

Its subcellular location is the cell membrane. The protein localises to the cytoplasm. It is found in the cytosol. It localises to the cytoplasmic vesicle. Participates in Wnt signaling by binding to the cytoplasmic C-terminus of frizzled family members and transducing the Wnt signal to down-stream effectors. Plays a role both in canonical and non-canonical Wnt signaling. Plays a role in the signal transduction pathways mediated by multiple Wnt genes. Required for LEF1 activation upon WNT1 and WNT3A signaling. DVL1 and PAK1 form a ternary complex with MUSK which is important for MUSK-dependent regulation of AChR clustering during the formation of the neuromuscular junction (NMJ). In Rattus norvegicus (Rat), this protein is Segment polarity protein dishevelled homolog DVL-1 (Dvl1).